The primary structure comprises 603 residues: Elongation factor 4 (603 aa).

The tr-type G domain occupies V7–P189. GTP-binding positions include D19 to T24 and N136 to D139.

The protein belongs to the TRAFAC class translation factor GTPase superfamily. Classic translation factor GTPase family. LepA subfamily.

The protein resides in the cell inner membrane. It carries out the reaction GTP + H2O = GDP + phosphate + H(+). Required for accurate and efficient protein synthesis under certain stress conditions. May act as a fidelity factor of the translation reaction, by catalyzing a one-codon backward translocation of tRNAs on improperly translocated ribosomes. Back-translocation proceeds from a post-translocation (POST) complex to a pre-translocation (PRE) complex, thus giving elongation factor G a second chance to translocate the tRNAs correctly. Binds to ribosomes in a GTP-dependent manner. This is Elongation factor 4 from Nostoc punctiforme (strain ATCC 29133 / PCC 73102).